The primary structure comprises 791 residues: Protein Rf1, mitochondrial (791 aa).

Residues 1–27 constitute a mitochondrion transit peptide; the sequence is MARRAASRAVGALRSDGSIQGRGGRAG. Residues 1-31 form a disordered region; that stretch reads MARRAASRAVGALRSDGSIQGRGGRAGGSGA. Positions 20–30 are enriched in gly residues; sequence QGRGGRAGGSG. PPR repeat units lie at residues 86 to 120, 121 to 156, 157 to 194, 195 to 229, 230 to 264, 265 to 299, 300 to 334, 335 to 369, 370 to 404, 405 to 439, 440 to 474, 475 to 509, 510 to 544, 545 to 579, 580 to 614, 615 to 649, 650 to 684, 685 to 719, and 720 to 754; these read DLCTYGILIGCCCRAGRLDLGFAALGNVIKKGFRV, DAIAFTPLLKGLCADKRTSDAMDIVLRRMTELGCIP, NVFSYNILLKGLCDENRSQEALELLHMMADDRGGGSPP, DVVSYTTVINGFFKEGDSDKAYSTYHEMLDRGILP, DVVTYNSIIAALCKAQAMDKAMEVLNTMVKNGVMP, DCMTYNSILHGYCSSGQPKEAIGFLKKMRSDGVEP, DVVTYSLLMDYLCKNGRCMEARKIFDSMTKRGLKP, EITTYGTLLQGYATKGALVEMHGLLDLMVRNGIHP, DHYVFSILICAYAKQGKVDQAMLVFSKMRQQGLNP, NAVTYGAVIGILCKSGRVEDAMLYFEQMIDEGLSP, GNIVYNSLIHGLCTCNKWERAEELILEMLDRGICL, NTIFFNSIIDSHCKEGRVIESEKLFELMVRIGVKP, NVITYNTLINGYCLAGKMDEAMKLLSGMVSVGLKP, NTVTYSTLINGYCKISRMEDALVLFKEMESSGVSP, DIITYNIILQGLFQTRRTAAAKELYVRITESGTQI, ELSTYNIILHGLCKNKLTDDALQMFQNLCLMDLKL, EARTFNIMIDALLKVGRNDEAKDLFVAFSSNGLVP, NYWTYRLMAENIIGQGLLEELDQLFLSMEDNGCTV, and DSGMLNFIVRELLQRGEITRAGTYLSMIDEKHFSL.

Its subcellular location is the mitochondrion. Its function is as follows. Reduces the expression of the cytoplasmic male sterility (CMS)-associated mitochondrial gene ORF79, encoding a cytotoxic peptide. Can restore male fertility by blocking ORF79 production via endonucleolytic cleavage of dicistronic ATP6/ORF79 mRNA. Promotes the editing of ATP6 mRNAs independently of its cleavage function. The polypeptide is Protein Rf1, mitochondrial (Rf1) (Oryza sativa subsp. indica (Rice)).